An 85-amino-acid chain; its full sequence is Kappa-theraphotoxin-Cg1d (85 aa).

Residues 1–21 (MKVSVLITLAVLGVMFVWASA) form the signal peptide. A propeptide spanning residues 22–51 (AELEERGSDQRDSPAWLKSMERIFQSEERE) is cleaved from the precursor. Disulfide bonds link Cys-52/Cys-66, Cys-59/Cys-71, and Cys-65/Cys-78.

It belongs to the neurotoxin 10 (Hwtx-1) family. 28 (Jztx-11) subfamily. Expressed by the venom gland.

It is found in the secreted. Its function is as follows. Probable ion channel inhibitor. The polypeptide is Kappa-theraphotoxin-Cg1d (Chilobrachys guangxiensis (Chinese earth tiger tarantula)).